A 365-amino-acid chain; its full sequence is Elongation factor Tu (365 aa).

Residues His-1–Thr-7, Asp-62–His-66, and Asn-117–Asp-120 contribute to the GTP site. Positions His-1 to Glu-185 constitute a tr-type G domain. Thr-7 is a Mg(2+) binding site.

This sequence belongs to the TRAFAC class translation factor GTPase superfamily. Classic translation factor GTPase family. EF-Tu/EF-1A subfamily. As to quaternary structure, monomer.

It is found in the cytoplasm. The enzyme catalyses GTP + H2O = GDP + phosphate + H(+). Functionally, GTP hydrolase that promotes the GTP-dependent binding of aminoacyl-tRNA to the A-site of ribosomes during protein biosynthesis. The sequence is that of Elongation factor Tu from Buchnera aphidicola subsp. Schlechtendalia chinensis.